Consider the following 57-residue polypeptide: UPF0391 membrane protein RPB_2510 (57 aa).

2 helical membrane passes run 6 to 26 and 35 to 55; these read WALIFLVISVIAGIFGFTGIS and ILFYIFAVIFIVLLILGFTIF.

The protein belongs to the UPF0391 family.

It localises to the cell membrane. This Rhodopseudomonas palustris (strain HaA2) protein is UPF0391 membrane protein RPB_2510.